The following is a 97-amino-acid chain: MKEKHQIVIWPVYLDANKARNEGRLTPMSCSVKTPRVMEIFKAAEKLGLHPEHVTGKAHPAAWADKSGYVLVDNIGPKTDLLRRIGTEIIRMRGGKQ.

Belongs to the SRP19 family. As to quaternary structure, part of the signal recognition particle protein translocation system, which is composed of SRP and FtsY. Archaeal SRP consists of a 7S RNA molecule of 300 nucleotides and two protein subunits: SRP54 and SRP19.

It localises to the cytoplasm. Involved in targeting and insertion of nascent membrane proteins into the cytoplasmic membrane. Binds directly to 7S RNA and mediates binding of the 54 kDa subunit of the SRP. The polypeptide is Signal recognition particle 19 kDa protein (Methanocella arvoryzae (strain DSM 22066 / NBRC 105507 / MRE50)).